Consider the following 281-residue polypeptide: ATP phosphoribosyltransferase (281 aa).

This sequence belongs to the ATP phosphoribosyltransferase family. Long subfamily. The cofactor is Mg(2+).

The protein resides in the cytoplasm. It catalyses the reaction 1-(5-phospho-beta-D-ribosyl)-ATP + diphosphate = 5-phospho-alpha-D-ribose 1-diphosphate + ATP. The protein operates within amino-acid biosynthesis; L-histidine biosynthesis; L-histidine from 5-phospho-alpha-D-ribose 1-diphosphate: step 1/9. Feedback inhibited by histidine. Functionally, catalyzes the condensation of ATP and 5-phosphoribose 1-diphosphate to form N'-(5'-phosphoribosyl)-ATP (PR-ATP). Has a crucial role in the pathway because the rate of histidine biosynthesis seems to be controlled primarily by regulation of HisG enzymatic activity. The sequence is that of ATP phosphoribosyltransferase (hisG) from Archaeoglobus fulgidus (strain ATCC 49558 / DSM 4304 / JCM 9628 / NBRC 100126 / VC-16).